A 409-amino-acid chain; its full sequence is 3-dehydro-bile acid delta(4,6)-reductase (409 aa).

Residues Ser-12, Glu-33, Val-131, Glu-378, Asn-390, and Leu-391 each contribute to the FAD site.

Belongs to the BaiN/RdsA family. BaiN subfamily. FAD is required as a cofactor.

It carries out the reaction 3-oxocholan-24-oyl-CoA + NAD(+) = 3-oxochol-4-en-24-oyl-CoA + NADH + H(+). It catalyses the reaction 3-oxochol-4-en-24-oyl-CoA + NAD(+) = 3-oxochol-4,6-dien-24-oyl-CoA + NADH + H(+). The catalysed reaction is 12alpha-hydroxy-3-oxocholan-24-oyl-CoA + NAD(+) = 12alpha-hydroxy-3-oxochol-4-en-24-oyl-CoA + NADH + H(+). The enzyme catalyses 12alpha-hydroxy-3-oxochol-4-en-24-oyl-CoA + NAD(+) = 12alpha-hydroxy-3-oxochola-4,6-dien-24-oyl-CoA + NADH + H(+). Its pathway is lipid metabolism; bile acid degradation. Involved in the secondary bile acid metabolism. Catalyzes two subsequent reductions of the double bonds within the bile acid A/B rings of 3-oxochol-4,6-dien-24-oyl-CoA and 12alpha-hydroxy-3-oxochol-4,6-dien-24-oyl-CoA to yield 3-oxocholan-24-oyl-CoA and 12alpha-hydroxy-3-oxocholan-24-oyl-CoA, respectively. The sequence is that of 3-dehydro-bile acid delta(4,6)-reductase from Clostridium scindens (strain ATCC 35704 / DSM 5676 / VPI 13733 / 19).